The chain runs to 64 residues: Large ribosomal subunit protein bL35 (64 aa).

Belongs to the bacterial ribosomal protein bL35 family.

The sequence is that of Large ribosomal subunit protein bL35 from Streptomyces coelicolor (strain ATCC BAA-471 / A3(2) / M145).